Consider the following 250-residue polypeptide: tRNA (guanine-N(1)-)-methyltransferase (250 aa).

S-adenosyl-L-methionine contacts are provided by residues Gly115 and 135–140; that span reads LGDFVL.

This sequence belongs to the RNA methyltransferase TrmD family. As to quaternary structure, homodimer.

It is found in the cytoplasm. The catalysed reaction is guanosine(37) in tRNA + S-adenosyl-L-methionine = N(1)-methylguanosine(37) in tRNA + S-adenosyl-L-homocysteine + H(+). Functionally, specifically methylates guanosine-37 in various tRNAs. This chain is tRNA (guanine-N(1)-)-methyltransferase, found in Legionella pneumophila (strain Lens).